We begin with the raw amino-acid sequence, 329 residues long: Acetyl-coenzyme A carboxylase carboxyl transferase subunit alpha (329 aa).

The CoA carboxyltransferase C-terminal domain occupies 40–294; that stretch reads QLESLASRRR…RAALERHLGE (255 aa).

It belongs to the AccA family. As to quaternary structure, acetyl-CoA carboxylase is a heterohexamer composed of biotin carboxyl carrier protein (AccB), biotin carboxylase (AccC) and two subunits each of ACCase subunit alpha (AccA) and ACCase subunit beta (AccD).

The protein localises to the cytoplasm. The enzyme catalyses N(6)-carboxybiotinyl-L-lysyl-[protein] + acetyl-CoA = N(6)-biotinyl-L-lysyl-[protein] + malonyl-CoA. The protein operates within lipid metabolism; malonyl-CoA biosynthesis; malonyl-CoA from acetyl-CoA: step 1/1. In terms of biological role, component of the acetyl coenzyme A carboxylase (ACC) complex. First, biotin carboxylase catalyzes the carboxylation of biotin on its carrier protein (BCCP) and then the CO(2) group is transferred by the carboxyltransferase to acetyl-CoA to form malonyl-CoA. The chain is Acetyl-coenzyme A carboxylase carboxyl transferase subunit alpha from Synechococcus sp. (strain CC9902).